The following is a 174-amino-acid chain: Adenylate kinase (174 aa).

The NMP stretch occupies residues 12–41 (STGDMLRAAIKAGTPLGLEAKKIIDEGGLV). Residues threonine 13, arginine 18, 39 to 41 (GLV), 67 to 70 (GFPR), and glutamine 74 each bind AMP. An LID region spans residues 104-141 (GRRVHLASGRTYHVTYNPPKVEGKDDVTGEDLIQRDDD). ATP is bound by residues arginine 105 and 114-115 (TY). Residues arginine 138 and arginine 149 each coordinate AMP.

This sequence belongs to the adenylate kinase family. As to quaternary structure, monomer.

It is found in the cytoplasm. It carries out the reaction AMP + ATP = 2 ADP. It functions in the pathway purine metabolism; AMP biosynthesis via salvage pathway; AMP from ADP: step 1/1. Catalyzes the reversible transfer of the terminal phosphate group between ATP and AMP. Plays an important role in cellular energy homeostasis and in adenine nucleotide metabolism. The chain is Adenylate kinase from Neisseria flavescens.